Here is a 97-residue protein sequence, read N- to C-terminus: YcgL domain-containing protein PFLU_1517 (97 aa).

Residues 3–87 (RICSIYRSKK…AEDEYIEHLP (85 aa)) enclose the YcgL domain.

The chain is YcgL domain-containing protein PFLU_1517 from Pseudomonas fluorescens (strain SBW25).